The sequence spans 867 residues: Dynamin-1 (867 aa).

Positions 28-294 constitute a Dynamin-type G domain; that stretch reads DLDLPQIAVV…LTNHIRDTLP (267 aa). The interval 38 to 45 is G1 motif; the sequence is GGQSAGKS. GDP contacts are provided by serine 41, glycine 43, lysine 44, serine 45, serine 46, arginine 59, and glycine 60. The interval 64-66 is G2 motif; it reads VTR. The residue at position 80 (tyrosine 80) is a Phosphotyrosine. A 3'-nitrotyrosine; alternate modification is found at tyrosine 125. A Phosphotyrosine; alternate modification is found at tyrosine 125. The interval 136–139 is G3 motif; sequence DLPG. The G4 motif stretch occupies residues 205 to 208; the sequence is TKLD. 6 residues coordinate GDP: lysine 206, aspartate 208, aspartate 211, asparagine 236, arginine 237, and glutamine 239. Positions 235-238 are G5 motif; the sequence is VNRS. Residues serine 306 and serine 347 each carry the phosphoserine modification. Tyrosine 354 is subject to Phosphotyrosine. Serine 512 is subject to Phosphoserine. Positions 515–625 constitute a PH domain; sequence QDEILVIRKG…WKASFLRAGV (111 aa). Positions 659-750 constitute a GED domain; it reads VETIRNLVDS…IIGDINTTTV (92 aa). The interval 767 to 867 is disordered; that stretch reads SVPAGRRSPT…HENRAGKARL (101 aa). Serine 774 and serine 778 each carry phosphoserine. Arginine 796 bears the Omega-N-methylarginine mark. Serine 822 is subject to Phosphoserine. Residues 825 to 843 are compositionally biased toward pro residues; it reads PFGPPPQVPSRPNRAPPGV. A phosphoserine mark is found at glycine 847, leucine 851, and lysine 857. A compositionally biased stretch (basic and acidic residues) spans 856–867; that stretch reads GKHENRAGKARL.

The protein belongs to the TRAFAC class dynamin-like GTPase superfamily. Dynamin/Fzo/YdjA family. As to quaternary structure, homodimer; homodimerization is mediated by the dynamin-type G domain which promotes assembly-stimulated GTPase activity. Homo-tetramer formed from two dimers in the absence of lipid. Oligomerizes into a helical polymer that self-assembles around the vesicle membrane, when associated to the menbrane through lipid binding. Interacts (via C-terminal proline-rich domain (PRD)) with SNX9 (via SH3 domain); this interaction allows regulation of DNM1 self-assembly during late stages of endocytic vesicle formation and supports DNM1's early functions in accelerating clathrin-coated pits (CCPs) maturation in non neuronals cell. Interacts (via C-terminal proline-rich domain (PRD)) with MYO1E (via SH3 domain); this interaction regulates receptor-mediated endocytosis. Interacts with SNX33 (via SH3 domain); this interaction decreases DNM1-dependent endocytosis. Interacts with DIAPH1. Interacts with GRB2 (via SH3 domain); this interaction mediates disassembly of DNM1 polymers, therefore modulates self-assembly. Forms a complex with BIN1 (via SH3 domain) and SH3GL2 (via SH3 domain). Forms a complex with SH3GL2 (via SH3 domain) and AMPH (via SH3 domain). Forms a complex with SH3GL2 (via SH3 domain) and SYNJ1. Interacts (via C-terminal proline-rich domain (PRD)) with SYT1; this interaction facilitates vesicle fission during clathrin-mediated endocytosis (CME). Interacts (via C-terminal proline-rich domain (PRD)) with PLCG1 (via SH3 domain); this interaction stimulates the release of GDP from DNM1 and enhances DNM1-dependent endocytosis. Interacts with SNPH; this interaction inhibits the binding of DNM1 to AMPH and DNM1-receptor-mediated endocytosis. Interacts with CAV1. Interacts with SH3GLB1 (via SH3 domain). Interacts with PACSIN1 (via SH3 domain), PACSIN2 (via SH3 domain) and PACSIN3 (via SH3 domain). Interacts with UNC119; this interaction decreases DNM1's GTPase activity and affects DNM1's interaction with AMPH. Interacts with AMPH. Interacts (GTP-bound form) with DNAJC6; this interaction allows clathrin-coated vesicle (CCV) formation at the plasma membrane. In terms of processing, phosphorylation at Ser-774 by GSK3B/GSK3-beta leads to inactivation of receptor-mediated endocytosis in non-neuronal cells. Dephosphorylation at Ser-774, through the EGFR downstream signaling, leads to activation and regulates early stages of clathrin-mediated endocytosis (CME). Phosphorylated on Tyr in response to EGF stimulation in cells expressing truncated EGFR. Phosphorylated by CDK5 leading to synaptic vesicle endocytosis (SVE) activation. As to expression, expressed exclusively in the brain.

Its subcellular location is the cell membrane. The protein localises to the membrane. It localises to the clathrin-coated pit. It is found in the cytoplasmic vesicle. The protein resides in the presynapse. Its subcellular location is the secretory vesicle. The protein localises to the chromaffin granule. The enzyme catalyses GTP + H2O = GDP + phosphate + H(+). In terms of biological role, catalyzes the hydrolysis of GTP and utilizes this energy to mediate vesicle scission and participates in many forms of endocytosis, such as clathrin-mediated endocytosis or synaptic vesicle endocytosis as well as rapid endocytosis (RE). Associates to the membrane, through lipid binding, and self-assembles into rings and stacks of interconnected rings through oligomerization to form a helical polymer around the vesicle membrane leading to constriction of invaginated coated pits around their necks. Self-assembly of the helical polymer induces membrane tubules narrowing until the polymer reaches a length sufficient to trigger GTP hydrolysis. Depending on the curvature imposed on the tubules, membrane detachment from the helical polymer upon GTP hydrolysis can cause spontaneous hemifission followed by complete fission. May play a role in regulating early stages of clathrin-mediated endocytosis in non-neuronal cells through its activation by dephosphorylation via the signaling downstream of EGFR. Controls vesicle size at a step before fission, during formation of membrane pits, at hippocampal synapses. Controls plastic adaptation of the synaptic vesicle recycling machinery to high levels of activity. Mediates rapid endocytosis (RE), a Ca(2+)-dependent and clathrin- and K(+)-independent process in chromaffin cells. Microtubule-associated force-producing protein involved in producing microtubule bundles and able to bind and hydrolyze GTP. Through its interaction with DNAJC6, acts during the early steps of clathrin-coated vesicle (CCV) formation. This is Dynamin-1 from Mus musculus (Mouse).